The chain runs to 965 residues: Vacuolar protein sorting-associated protein 54 (965 aa).

Ser8 carries the phosphoserine modification. Positions 228–249 form a coiled coil; the sequence is ELQDYLKKTSQAVKMLRDKIAQ. A disordered region spans residues 516 to 558; it reads ASAAVDTTSQRNTSPHSEPCSSDSVSEPECTTDSSSSKEQTPA. Positions 520-558 are enriched in polar residues; it reads VDTTSQRNTSPHSEPCSSDSVSEPECTTDSSSSKEQTPA.

This sequence belongs to the VPS54 family. As to quaternary structure, component of the Golgi-associated retrograde protein (GARP) complex, also called VFT (VPS fifty-three) complex, composed of VPS51, VPS52, VPS53 and VPS54. EIPR1 interacts with GARP complex and mediates its recruitment to the trans-Golgi network. Interacts with VPS51 in an EIPR1-independent manner. Ubiquitously expressed at low level.

The protein localises to the golgi apparatus. The protein resides in the trans-Golgi network. Its subcellular location is the membrane. In terms of biological role, acts as a component of the GARP complex that is involved in retrograde transport from early and late endosomes to the trans-Golgi network (TGN). The GARP complex is required for the maintenance of the cycling of mannose 6-phosphate receptors between the TGN and endosomes, this cycling is necessary for proper lysosomal sorting of acid hydrolases such as CTSD. Within the GARP complex, required to tether the complex to the TGN. Not involved in endocytic recycling. In Rattus norvegicus (Rat), this protein is Vacuolar protein sorting-associated protein 54 (Vps54).